The primary structure comprises 577 residues: F-box/TPR repeat protein pof3 (577 aa).

3 TPR repeats span residues V6–P39, I41–N74, and R76–M108. The F-box domain maps to I138–L180.

As to quaternary structure, a part of the E3 ubiquitin ligase Skp1-Cullin-1-F-box (SCF) complex. Interacts with cul1, mcl1 and skp1.

The protein resides in the mitochondrion. It is found in the nucleus. Functionally, has a role in substrate recognition in the Skp1-Cullin-1/Cdc53-F-box (SCF) ubiquitin ligase complex. Required for the maintenance of telomere length and transcriptional silencing at the telomere. Also required for chromosome segregation. This is F-box/TPR repeat protein pof3 (pof3) from Schizosaccharomyces pombe (strain 972 / ATCC 24843) (Fission yeast).